A 420-amino-acid polypeptide reads, in one-letter code: L-cysteine:1D-myo-inositol 2-amino-2-deoxy-alpha-D-glucopyranoside ligase (420 aa).

Position 43 (cysteine 43) interacts with Zn(2+). Residues 43–46 (CGIT), threonine 58, and 81–83 (NIT) each bind L-cysteinyl-5'-AMP. The 'HIGH' region signature appears at 45–55 (ITPYDATHLGH). Positions 187-192 (ERGGDP) match the 'ERGGDP' region motif. Tryptophan 227 is an L-cysteinyl-5'-AMP binding site. Cysteine 231 contacts Zn(2+). 249 to 251 (GSD) serves as a coordination point for L-cysteinyl-5'-AMP. Residue histidine 256 coordinates Zn(2+). Residue isoleucine 289 coordinates L-cysteinyl-5'-AMP. Residues 295–299 (KMSKS) carry the 'KMSKS' region motif.

Belongs to the class-I aminoacyl-tRNA synthetase family. MshC subfamily. As to quaternary structure, monomer. Zn(2+) serves as cofactor.

The catalysed reaction is 1D-myo-inositol 2-amino-2-deoxy-alpha-D-glucopyranoside + L-cysteine + ATP = 1D-myo-inositol 2-(L-cysteinylamino)-2-deoxy-alpha-D-glucopyranoside + AMP + diphosphate + H(+). Its function is as follows. Catalyzes the ATP-dependent condensation of GlcN-Ins and L-cysteine to form L-Cys-GlcN-Ins. The chain is L-cysteine:1D-myo-inositol 2-amino-2-deoxy-alpha-D-glucopyranoside ligase from Segniliparus rotundus (strain ATCC BAA-972 / CDC 1076 / CIP 108378 / DSM 44985 / JCM 13578).